A 260-amino-acid chain; its full sequence is ATP synthase subunit a (260 aa).

7 helical membrane-spanning segments follow: residues isoleucine 30–valine 50, leucine 96–valine 116, phenylalanine 125–alanine 145, phenylalanine 151–isoleucine 171, leucine 187–serine 207, valine 213–leucine 233, and glutamate 234–asparagine 254.

The protein belongs to the ATPase A chain family. As to quaternary structure, F-type ATPases have 2 components, CF(1) - the catalytic core - and CF(0) - the membrane proton channel. CF(1) has five subunits: alpha(3), beta(3), gamma(1), delta(1), epsilon(1). CF(0) has three main subunits: a(1), b(2) and c(9-12). The alpha and beta chains form an alternating ring which encloses part of the gamma chain. CF(1) is attached to CF(0) by a central stalk formed by the gamma and epsilon chains, while a peripheral stalk is formed by the delta and b chains.

The protein localises to the cell inner membrane. Its function is as follows. Key component of the proton channel; it plays a direct role in the translocation of protons across the membrane. This is ATP synthase subunit a from Novosphingobium aromaticivorans (strain ATCC 700278 / DSM 12444 / CCUG 56034 / CIP 105152 / NBRC 16084 / F199).